Consider the following 568-residue polypeptide: Putative F-box protein At5g39480 (568 aa).

One can recognise an F-box domain in the interval 9-55 (ACLLLTLPEDVFAVISRFLSPSDICNLILCGKSLPALVDTEKMWLVQ). Residues 315–337 (TNVLGESSSSKNTTPSQSEIRVS) form a disordered region. Residues 321-332 (SSSSKNTTPSQS) show a composition bias toward low complexity.

The protein is Putative F-box protein At5g39480 of Arabidopsis thaliana (Mouse-ear cress).